We begin with the raw amino-acid sequence, 82 residues long: MKKRYYTVKHGTLRALQEFADKHNVEVRREGGSKALRMYRPDGKWRTVVDFKTNSVPQGVRDRAFEEWEQIIIDNALLLNAD.

Modulator protein affects the P1 c1 repression system. The sequence is that of Modulator protein (bof) from Enterobacteriaceae (Bacteriophage P1).